We begin with the raw amino-acid sequence, 395 residues long: 1-deoxy-D-xylulose 5-phosphate reductoisomerase (395 aa).

T15, G16, S17, I18, G41, N43, and N126 together coordinate NADPH. A 1-deoxy-D-xylulose 5-phosphate-binding site is contributed by K127. E128 is an NADPH binding site. Mn(2+) is bound at residue D152. Residues S153, E154, S178, and H201 each contribute to the 1-deoxy-D-xylulose 5-phosphate site. E154 is a binding site for Mn(2+). An NADPH-binding site is contributed by G207. Residues S214, N219, K220, and E223 each coordinate 1-deoxy-D-xylulose 5-phosphate. E223 contributes to the Mn(2+) binding site.

It belongs to the DXR family. Mg(2+) is required as a cofactor. Requires Mn(2+) as cofactor.

The enzyme catalyses 2-C-methyl-D-erythritol 4-phosphate + NADP(+) = 1-deoxy-D-xylulose 5-phosphate + NADPH + H(+). The protein operates within isoprenoid biosynthesis; isopentenyl diphosphate biosynthesis via DXP pathway; isopentenyl diphosphate from 1-deoxy-D-xylulose 5-phosphate: step 1/6. Functionally, catalyzes the NADPH-dependent rearrangement and reduction of 1-deoxy-D-xylulose-5-phosphate (DXP) to 2-C-methyl-D-erythritol 4-phosphate (MEP). The polypeptide is 1-deoxy-D-xylulose 5-phosphate reductoisomerase (Ruegeria sp. (strain TM1040) (Silicibacter sp.)).